An 891-amino-acid chain; its full sequence is Mating-type protein A-alpha Y1 (891 aa).

A DNA-binding region (homeobox) is located at residues 146–205 (SKKPRPKFHSEYTPLLELYFRFNAYPTYADRRVLAEKTGMLTRQITVWFQNHRRRAKGPL). 5 disordered regions span residues 241-291 (PITL…PSTL), 319-339 (DIEM…LPKG), 393-437 (TRKP…RRVS), 610-718 (ARRK…EQSL), and 800-822 (MNWT…GGDE). Residues 244 to 257 (LGNNKTPDLTTSSR) are compositionally biased toward polar residues. A compositionally biased stretch (basic residues) spans 328 to 337 (PKRRKMKKLP). The segment covering 427 to 437 (ASSTVPSRRVS) has biased composition (low complexity). The span at 627–638 (KKDKKERKKAGL) shows a compositional bias: basic residues. 2 stretches are compositionally biased toward low complexity: residues 651–667 (VSSR…TSAR) and 676–710 (QPSS…SMPS). Residues 800–818 (MNWTASVGSNAQDPASQES) are compositionally biased toward polar residues.

The protein localises to the nucleus. In terms of biological role, specifies A-alpha-1 mating-type. May regulate the expression of genes specific to the homokaryotic cell type. This is Mating-type protein A-alpha Y1 from Schizophyllum commune (Split gill fungus).